The following is a 234-amino-acid chain: Adenylate dimethylallyltransferase (234 aa).

The protein belongs to the isopentenyl transferase family.

It carries out the reaction dimethylallyl diphosphate + AMP = N(6)-(dimethylallyl)adenosine 5'-phosphate + diphosphate. Transfers dimethylallyl groups to AMP as part of the biosynthesis of cytokinin phytohormones. In Pseudomonas savastanoi (Pseudomonas syringae pv. savastanoi), this protein is Adenylate dimethylallyltransferase (ptz).